Reading from the N-terminus, the 120-residue chain is Large ribosomal subunit protein eL34z (120 aa).

Positions Val-31–Ile-51 are disordered.

It belongs to the eukaryotic ribosomal protein eL34 family.

The polypeptide is Large ribosomal subunit protein eL34z (RPL34A) (Arabidopsis thaliana (Mouse-ear cress)).